Here is a 237-residue protein sequence, read N- to C-terminus: Demethylmenaquinone methyltransferase (237 aa).

S-adenosyl-L-methionine is bound by residues Thr-58, Asp-79, and 107–108 (NA).

This sequence belongs to the class I-like SAM-binding methyltransferase superfamily. MenG/UbiE family.

It catalyses the reaction a 2-demethylmenaquinol + S-adenosyl-L-methionine = a menaquinol + S-adenosyl-L-homocysteine + H(+). It participates in quinol/quinone metabolism; menaquinone biosynthesis; menaquinol from 1,4-dihydroxy-2-naphthoate: step 2/2. Its function is as follows. Methyltransferase required for the conversion of demethylmenaquinol (DMKH2) to menaquinol (MKH2). The sequence is that of Demethylmenaquinone methyltransferase from Lactiplantibacillus plantarum (strain ATCC BAA-793 / NCIMB 8826 / WCFS1) (Lactobacillus plantarum).